A 131-amino-acid polypeptide reads, in one-letter code: uncharacterized protein (131 aa).

This is an uncharacterized protein from Archaeoglobus fulgidus (strain ATCC 49558 / DSM 4304 / JCM 9628 / NBRC 100126 / VC-16).